The chain runs to 102 residues: Keratinocyte differentiation-associated protein (102 aa).

The signal sequence occupies residues 1-22 (MKIPILPVVALLSLLALHAVQG).

As to expression, expression restricted to suprabasal keratinocytes of the epidermis.

The protein resides in the secreted. In terms of biological role, may act as a soluble regulator of keratinocyte differentiation. May play an important role in embryonic skin morphogenesis. This is Keratinocyte differentiation-associated protein from Mus musculus (Mouse).